We begin with the raw amino-acid sequence, 691 residues long: Two-component response regulator ORR21 (691 aa).

One can recognise a Response regulatory domain in the interval 17–132 (KVLVVDDDPT…ELKNIWQHVI (116 aa)). Aspartate 68 is modified (4-aspartylphosphate). Residues 139–155 (NKEHEHSGSLDDTDRTR) show a composition bias toward basic and acidic residues. 2 disordered regions span residues 139-204 (NKEH…KKPR) and 616-647 (SHPG…HGFV). Positions 199–258 (TSKKPRVVWSVELHQQFVNAVNHLGIDKAVPKKILELMNVPGLTRENVASHLQKFRLYLK) form a DNA-binding region, myb-like GARP. Positions 616 to 628 (SHPGSSSSSFQSS) are enriched in low complexity.

This sequence belongs to the ARR family. Type-B subfamily. In terms of processing, two-component system major event consists of a His-to-Asp phosphorelay between a sensor histidine kinase (HK) and a response regulator (RR). In plants, the His-to-Asp phosphorelay involves an additional intermediate named Histidine-containing phosphotransfer protein (HPt). This multistep phosphorelay consists of a His-Asp-His-Asp sequential transfer of a phosphate group between first a His and an Asp of the HK protein, followed by the transfer to a conserved His of the HPt protein and finally the transfer to an Asp in the receiver domain of the RR protein.

Its subcellular location is the nucleus. Its function is as follows. Transcriptional activator that binds specific DNA sequence. Functions as a response regulator involved in His-to-Asp phosphorelay signal transduction system. Phosphorylation of the Asp residue in the receiver domain activates the ability of the protein to promote the transcription of target genes. May directly activate some type-A response regulators in response to cytokinins. This Oryza sativa subsp. indica (Rice) protein is Two-component response regulator ORR21.